An 84-amino-acid chain; its full sequence is Esculentin-1SIa (84 aa).

Positions 1 to 22 (MFTLKKPLLLIVLLGIISLSLC) are cleaved as a signal peptide. A propeptide spans 23 to 36 (EQERAADEDEGSEI) (removed in mature form). An intrachain disulfide couples C78 to C84.

As to expression, expressed by the skin glands.

The protein localises to the secreted. Its function is as follows. Has antimicrobial activity against Gram-negative bacterium E.coli ATCC 8739 (MIC=6.3 ug), against Gram positive bacteria S.aureus ATCC 6538 (MIC=3.1 ug), methicillin-resistant S.aureus ATCC 43300 (MIC=25 ug) and B.subtilis ATCC 6633 (MIC=25 ug). Has no activity against fungus C.albicans ATCC 90028. The chain is Esculentin-1SIa from Odorrana ishikawae (Ishikawa's frog).